The following is a 454-amino-acid chain: Mitochondrial dynamics protein MID49 (454 aa).

Residues 1–22 (MAEFSQKRGKRRSDEGLGSMVD) lie on the Mitochondrial intermembrane side of the membrane. Ser-13 is subject to Phosphoserine. A helical transmembrane segment spans residues 23–43 (FLLANARLVLGVGGAAVLGIA). Residues 44–454 (TLAVKRFIDR…SGLQEPEGLL (411 aa)) lie on the Cytoplasmic side of the membrane. The tract at residues 76 to 119 (ATPHLQPRPPPAALSQPVLPLAPSSSAPEGPAETDPEVTPQLSS) is disordered. The segment covering 88–103 (ALSQPVLPLAPSSSAP) has biased composition (low complexity).

This sequence belongs to the MID49/MID51 family. In terms of assembly, interacts with DNM1L. Expressed in all tissues tested with highest expression in heart and skeletal muscle.

It localises to the mitochondrion outer membrane. Mitochondrial outer membrane protein involved in the regulation of mitochondrial organization. It is required for mitochondrial fission and promotes the recruitment and association of the fission mediator dynamin-related protein 1 (DNM1L) to the mitochondrial surface independently of the mitochondrial fission FIS1 and MFF proteins. Regulates DNM1L GTPase activity. This is Mitochondrial dynamics protein MID49 (MIEF2) from Homo sapiens (Human).